A 469-amino-acid chain; its full sequence is tRNA-2-methylthio-N(6)-dimethylallyladenosine synthase (469 aa).

The 121-residue stretch at 22–142 folds into the MTTase N-terminal domain; it reads RKVFIKTYGC…LPEALRRAKE (121 aa). The [4Fe-4S] cluster site is built by cysteine 31, cysteine 67, cysteine 105, cysteine 183, cysteine 187, and cysteine 190. Residues 169–401 enclose the Radical SAM core domain; the sequence is RARGVTAFLT…QALLLKQQQE (233 aa). The TRAM domain maps to 404-466; that stretch reads ESCIGKEIDL…TNSLFAERAE (63 aa).

This sequence belongs to the methylthiotransferase family. MiaB subfamily. In terms of assembly, monomer. The cofactor is [4Fe-4S] cluster.

It localises to the cytoplasm. The catalysed reaction is N(6)-dimethylallyladenosine(37) in tRNA + (sulfur carrier)-SH + AH2 + 2 S-adenosyl-L-methionine = 2-methylsulfanyl-N(6)-dimethylallyladenosine(37) in tRNA + (sulfur carrier)-H + 5'-deoxyadenosine + L-methionine + A + S-adenosyl-L-homocysteine + 2 H(+). Catalyzes the methylthiolation of N6-(dimethylallyl)adenosine (i(6)A), leading to the formation of 2-methylthio-N6-(dimethylallyl)adenosine (ms(2)i(6)A) at position 37 in tRNAs that read codons beginning with uridine. In Rhizobium etli (strain ATCC 51251 / DSM 11541 / JCM 21823 / NBRC 15573 / CFN 42), this protein is tRNA-2-methylthio-N(6)-dimethylallyladenosine synthase.